The primary structure comprises 380 residues: Succinyl-diaminopimelate desuccinylase (380 aa).

A Zn(2+)-binding site is contributed by His-69. Residue Asp-71 is part of the active site. Asp-102 contributes to the Zn(2+) binding site. Glu-135 serves as the catalytic Proton acceptor. The Zn(2+) site is built by Glu-136, Glu-164, and His-353.

Belongs to the peptidase M20A family. DapE subfamily. In terms of assembly, homodimer. Zn(2+) serves as cofactor. It depends on Co(2+) as a cofactor.

The enzyme catalyses N-succinyl-(2S,6S)-2,6-diaminopimelate + H2O = (2S,6S)-2,6-diaminopimelate + succinate. It participates in amino-acid biosynthesis; L-lysine biosynthesis via DAP pathway; LL-2,6-diaminopimelate from (S)-tetrahydrodipicolinate (succinylase route): step 3/3. In terms of biological role, catalyzes the hydrolysis of N-succinyl-L,L-diaminopimelic acid (SDAP), forming succinate and LL-2,6-diaminopimelate (DAP), an intermediate involved in the bacterial biosynthesis of lysine and meso-diaminopimelic acid, an essential component of bacterial cell walls. This is Succinyl-diaminopimelate desuccinylase from Cereibacter sphaeroides (strain ATCC 17025 / ATH 2.4.3) (Rhodobacter sphaeroides).